The sequence spans 173 residues: Crossover junction endodeoxyribonuclease RuvC (173 aa).

Active-site residues include Asp8, Glu67, and Asp139. Positions 8, 67, and 139 each coordinate Mg(2+).

The protein belongs to the RuvC family. As to quaternary structure, homodimer which binds Holliday junction (HJ) DNA. The HJ becomes 2-fold symmetrical on binding to RuvC with unstacked arms; it has a different conformation from HJ DNA in complex with RuvA. In the full resolvosome a probable DNA-RuvA(4)-RuvB(12)-RuvC(2) complex forms which resolves the HJ. The cofactor is Mg(2+).

It localises to the cytoplasm. The enzyme catalyses Endonucleolytic cleavage at a junction such as a reciprocal single-stranded crossover between two homologous DNA duplexes (Holliday junction).. In terms of biological role, the RuvA-RuvB-RuvC complex processes Holliday junction (HJ) DNA during genetic recombination and DNA repair. Endonuclease that resolves HJ intermediates. Cleaves cruciform DNA by making single-stranded nicks across the HJ at symmetrical positions within the homologous arms, yielding a 5'-phosphate and a 3'-hydroxyl group; requires a central core of homology in the junction. The consensus cleavage sequence is 5'-(A/T)TT(C/G)-3'. Cleavage occurs on the 3'-side of the TT dinucleotide at the point of strand exchange. HJ branch migration catalyzed by RuvA-RuvB allows RuvC to scan DNA until it finds its consensus sequence, where it cleaves and resolves the cruciform DNA. The chain is Crossover junction endodeoxyribonuclease RuvC from Shewanella oneidensis (strain ATCC 700550 / JCM 31522 / CIP 106686 / LMG 19005 / NCIMB 14063 / MR-1).